Here is a 238-residue protein sequence, read N- to C-terminus: Pre-protein VI (238 aa).

A propeptide spanning residues 1 to 33 (MDAVNFSILAPRYGSHPMMSAWSGIGTSDMNGG) is cleaved from the precursor. Residues 34-54 (AFNWGGIWSGIKNFGSNVKNW) form an amphipathic alpha-helix essential for membrane lytic activity region. The involved in endosomal membrane lysis stretch occupies residues 36–53 (NWGGIWSGIKNFGSNVKN). The interaction with hexon protein stretch occupies residues 48 to 74 (GSNVKNWGSRAWNSQTGKLLRQKLNDT). The Nuclear export signal motif lies at 67-76 (LRQKLNDTKV). Positions 153–156 (PPSY) match the PPXY motif motif. The disordered stretch occupies residues 187-212 (TLELKPSDQPPPYSPQSSNMPVTAPV). The short motif at 219 to 230 (GTLANIVGVGLS) is the Nuclear export signal element. The tract at residues 221–227 (LANIVGV) is interaction with hexon protein. Residues 228-238 (GLSNVKRRRCF) are binds to importin alpha/beta, involved in hexon nuclear import. Positions 233 to 236 (KRRR) match the Nuclear localization signal motif.

The protein belongs to the adenoviridae protein VI family. As to quaternary structure, interacts with hexon protein; this interaction allows nuclear import of hexon trimers and possibly pre-capsid assembly. Interacts (via C-terminal NLS) with importin alpha/beta. Interacts (via PPxY motif) with host NEDD4 ubiquitine ligase; this interaction might play a role in virus intracellular transport during entry. Part of a complex composed of the core-capsid bridging protein, the endosome lysis protein VI and the hexon-linking protein VIII; these interactions bridge the virus core to the capsid. Interacts with peripentonal hexons; this interaction stabilizes the capsid by gluing two peripentonal hexons together and joining them with an adjacent group-of-nine hexon. In terms of assembly, heterodimer with the viral protease; disulfide-linked. Interacts with the viral protease. Ubiquitinated by Nedd4 following partial capsid disassembly; which might play a role in intracellular virus movement during entry. In terms of processing, contains the major nuclear import and export signals. Proteolytically removed during virion maturation. The processing of the C-terminus turns the precursor into a mature viral structural protein and abrogates its ability to promote hexon import and act as a potential chaperone protein.

It is found in the host nucleus. It localises to the host cytoplasm. The protein resides in the virion. Functionally, during virus assembly, promotes hexon trimers nuclear import through nuclear pore complexes via an importin alpha/beta-dependent mechanism. By analogy to herpesviruses capsid assembly, might act as a chaperone to promote the formation of the icosahedral capsid. Its function is as follows. Structural component of the virion that provides increased stability to the particle shell through its interaction with the core-capsid bridging protein and the hexon-linking protein VIII. Fibers shedding during virus entry into host cell allows the endosome lysis protein to be exposed as a membrane-lytic peptide. Exhibits pH-independent membrane fragmentation activity and probably mediates viral rapid escape from host endosome via organellar membrane lysis. It is not clear if it then remains partially associated with the capsid and involved in the intracellular microtubule-dependent transport of capsid to the nucleus, or if it is lost during endosomal penetration. In terms of biological role, cofactor that activates the viral protease. Binds to viral protease in a 1:1 ratio. The polypeptide is Pre-protein VI (Canis lupus familiaris (Dog)).